The following is a 98-amino-acid chain: NADH-ubiquinone oxidoreductase chain 4L (98 aa).

3 helical membrane-spanning segments follow: residues 1-21 (MSLV…GLLM), 29-49 (SLLC…IMIL), and 61-81 (IILL…LVMV).

Belongs to the complex I subunit 4L family. Core subunit of respiratory chain NADH dehydrogenase (Complex I) which is composed of 45 different subunits.

The protein localises to the mitochondrion inner membrane. It carries out the reaction a ubiquinone + NADH + 5 H(+)(in) = a ubiquinol + NAD(+) + 4 H(+)(out). Functionally, core subunit of the mitochondrial membrane respiratory chain NADH dehydrogenase (Complex I) which catalyzes electron transfer from NADH through the respiratory chain, using ubiquinone as an electron acceptor. Part of the enzyme membrane arm which is embedded in the lipid bilayer and involved in proton translocation. The polypeptide is NADH-ubiquinone oxidoreductase chain 4L (MT-ND4L) (Urotrichus talpoides (Japanese shrew mole)).